We begin with the raw amino-acid sequence, 174 residues long: MSLPIYLIGARGCGKTTVGQALALALGYDFCDTDHYLQQARQQTVADIVAIEGWAGFRAREAESLKAVTAASKVIATGGGMVLAEENRLYMREHGRVIYLNANALVLAARLEAYPLADQRPTLTGRPVAEEMVEVLAARDALYQLAAHHIIDAMQTPDAVVNQIVSSLSLARAS.

12–17 (GCGKTT) provides a ligand contact to ATP. Positions 16 and 32 each coordinate Mg(2+). Substrate-binding residues include Asp34, Arg58, and Gly79. The interval 112 to 126 (EAYPLADQRPTLTGR) is LID domain. Residue Arg120 coordinates ATP. A substrate-binding site is contributed by Arg139. Gln155 contributes to the ATP binding site.

The protein belongs to the shikimate kinase family. AroL subfamily. In terms of assembly, monomer. Requires Mg(2+) as cofactor.

Its subcellular location is the cytoplasm. The catalysed reaction is shikimate + ATP = 3-phosphoshikimate + ADP + H(+). It functions in the pathway metabolic intermediate biosynthesis; chorismate biosynthesis; chorismate from D-erythrose 4-phosphate and phosphoenolpyruvate: step 5/7. Functionally, catalyzes the specific phosphorylation of the 3-hydroxyl group of shikimic acid using ATP as a cosubstrate. This is Shikimate kinase 2 from Erwinia tasmaniensis (strain DSM 17950 / CFBP 7177 / CIP 109463 / NCPPB 4357 / Et1/99).